Here is a 477-residue protein sequence, read N- to C-terminus: Bifunctional protein HldE (477 aa).

A ribokinase region spans residues 1–318; that stretch reads MQIQLPMFQN…RRAVQQEQGA (318 aa). Position 195 to 198 (195 to 198) interacts with ATP; sequence NLSE. Asp-264 is an active-site residue. Residues 344 to 477 form a cytidylyltransferase region; the sequence is FTNGCFDIIH…VEKIRKDQVK (134 aa).

In the N-terminal section; belongs to the carbohydrate kinase PfkB family. The protein in the C-terminal section; belongs to the cytidylyltransferase family. Homodimer.

It carries out the reaction D-glycero-beta-D-manno-heptose 7-phosphate + ATP = D-glycero-beta-D-manno-heptose 1,7-bisphosphate + ADP + H(+). It catalyses the reaction D-glycero-beta-D-manno-heptose 1-phosphate + ATP + H(+) = ADP-D-glycero-beta-D-manno-heptose + diphosphate. It participates in nucleotide-sugar biosynthesis; ADP-L-glycero-beta-D-manno-heptose biosynthesis; ADP-L-glycero-beta-D-manno-heptose from D-glycero-beta-D-manno-heptose 7-phosphate: step 1/4. The protein operates within nucleotide-sugar biosynthesis; ADP-L-glycero-beta-D-manno-heptose biosynthesis; ADP-L-glycero-beta-D-manno-heptose from D-glycero-beta-D-manno-heptose 7-phosphate: step 3/4. Its function is as follows. Catalyzes the phosphorylation of D-glycero-D-manno-heptose 7-phosphate at the C-1 position to selectively form D-glycero-beta-D-manno-heptose-1,7-bisphosphate. In terms of biological role, catalyzes the ADP transfer from ATP to D-glycero-beta-D-manno-heptose 1-phosphate, yielding ADP-D-glycero-beta-D-manno-heptose. This chain is Bifunctional protein HldE, found in Hahella chejuensis (strain KCTC 2396).